The sequence spans 585 residues: Optineurin (585 aa).

Positions 1-32 are disordered; the sequence is MSHQPLSCLTEKGDSSCETPGNGPSNMVHPNL. The span at 16–25 shows a compositional bias: polar residues; it reads SCETPGNGPS. The stretch at 38–181 forms a coiled coil; the sequence is EELLQQMKEL…VSELQLKLNS (144 aa). Residues 58 to 220 form an interaction with Rab8 region; sequence MKLNNQAMKG…GPTRTDSISM (163 aa). The LIR motif lies at 187–192; the sequence is DSFVEI. Residues S188 and S209 each carry the phosphoserine modification. Disordered stretches follow at residues 200 to 220 and 269 to 299; these read EGAMKEMRNSAGPTRTDSISM and FEKKANGHSAIETQTEGSTQKEEEDKDPESV. Residues 244-512 are a coiled coil; it reads CLREGNQKVE…LLKENNDFED (269 aa). S346 is subject to Phosphoserine. The interaction with HD stretch occupies residues 415–585; sequence TKQQAEKVDK…LQIHVMDCII (171 aa). Residues 416–525 are interaction with MYO6; sequence KQQAEKVDKV…RQSLMEMQCR (110 aa). Positions 478-483 match the UBAN motif; that stretch reads DFHAER. At S531 the chain carries Phosphoserine. The CCHC NOA-type zinc finger occupies 555 to 585; sequence PRSIPIHSCPKCGEVLPDIDTLQIHVMDCII. Positions 563, 566, 579, and 583 each coordinate Zn(2+).

In terms of assembly, self-associates. Interacts with HD. Interacts with GTF3A. Interacts with MYO6. Interacts (via UBAN) with ubiquitinated TFRC. Interacts with GTP-bound Rab8 (RAB8A and/or RAB8B). Interacts with TBC1D17. Interacts with TBK1. Interacts with TRAF3. Binds to linear ubiquitin chains. Interacts with LC3 family members MAP1LC3A, MAP1LC3B, GABARAP, GABARAPL1 and GABARAPL2; OPTN phosphorylation increases the association (at least with MAP1LC3B). Interacts with RAB12; the interaction may be indirect. Interacts with TBK1; this interaction leads to the Golgi localization of TBK1 and its subsequent activation. Interacts with palmitoyltransferase ZDHHC17/HIP14; the interaction does not lead to palmitoylation of OPTN. Interacts with CYLD. Interacts with TOM1; the interaction is indirect and is mediated by MYO6, which acts as a bridge between TOM1 and OPTN. Interacts with USP12; the interaction is independent of USP12 deubiquitinase activity and may be involved in regulation of autophagic flux. Post-translationally, phosphorylated by TBK1, leading to restrict bacterial proliferation in case of infection.

It localises to the cytoplasm. The protein localises to the perinuclear region. It is found in the golgi apparatus. Its subcellular location is the trans-Golgi network. The protein resides in the cytoplasmic vesicle. It localises to the autophagosome. The protein localises to the recycling endosome. Plays an important role in the maintenance of the Golgi complex, in membrane trafficking, in exocytosis, through its interaction with myosin VI and Rab8. Links myosin VI to the Golgi complex and plays an important role in Golgi ribbon formation. Negatively regulates the induction of IFNB in response to RNA virus infection. Plays a neuroprotective role in the eye and optic nerve. Probably part of the TNF-alpha signaling pathway that can shift the equilibrium toward induction of cell death. May act by regulating membrane trafficking and cellular morphogenesis via a complex that contains Rab8 and huntingtin (HD). Mediates the interaction of Rab8 with the probable GTPase-activating protein TBC1D17 during Rab8-mediated endocytic trafficking, such as that of transferrin receptor (TFRC/TfR); regulates Rab8 recruitment to tubules emanating from the endocytic recycling compartment. Autophagy receptor that interacts directly with both the cargo to become degraded and an autophagy modifier of the MAP1 LC3 family; targets ubiquitin-coated bacteria (xenophagy) and appears to function in the same pathway as SQSTM1 and CALCOCO2/NDP52. This is Optineurin (Optn) from Rattus norvegicus (Rat).